We begin with the raw amino-acid sequence, 125 residues long: Class III hydrophobin G (125 aa).

A signal peptide spans 1-20 (MKPSIVTFLMLAAVTAAVSA). 4 disulfides stabilise this stretch: C54-C107, C60-C101, C61-C94, and C108-C122.

The protein belongs to the fungal hydrophobin family. Self-assembles to form functional amyloid fibrils called rodlets. Self-assembly into fibrillar rodlets occurs spontaneously at hydrophobic:hydrophilic interfaces and the rodlets further associate laterally to form amphipathic monolayers.

Its subcellular location is the secreted. The protein localises to the cell wall. Its function is as follows. Aerial growth, conidiation, and dispersal of filamentous fungi in the environment rely upon a capability of their secreting small amphipathic proteins called hydrophobins (HPBs) with low sequence identity. Class I can self-assemble into an outermost layer of rodlet bundles on aerial cell surfaces, conferring cellular hydrophobicity that supports fungal growth, development and dispersal; whereas Class II form highly ordered films at water-air interfaces through intermolecular interactions but contribute nothing to the rodlet structure. RodF and rodG belong to Class III, which contains hydrophobins with intermediate (between classes I and II) or atypical characteristics. RodG, unlike rodA, is not required for rodlet formation. This chain is Class III hydrophobin G, found in Aspergillus fumigatus (strain ATCC MYA-4609 / CBS 101355 / FGSC A1100 / Af293) (Neosartorya fumigata).